Reading from the N-terminus, the 286-residue chain is Uridylate cyclase (286 aa).

In terms of domain architecture, Guanylate cyclase spans Thr90 to Ser223. Phe93 contacts a ribonucleoside 5'-triphosphate. The Mn(2+) site is built by Asp95, Ile96, and Asp140.

Belongs to the adenylyl cyclase class-4/guanylyl cyclase family. Pyrimidine cyclase subfamily. As to quaternary structure, homodimer. It depends on Mn(2+) as a cofactor.

The protein localises to the cytoplasm. The enzyme catalyses UTP = 3',5'-cyclic UMP + diphosphate. Pycsar (pyrimidine cyclase system for antiphage resistance) provides immunity against bacteriophage. The pyrimidine cyclase (PycC) synthesizes cyclic nucleotides in response to infection; these serve as specific second messenger signals. The signals activate the adjacent effector, leading to bacterial cell death and abortive phage infection. A clade C Pycsar system. Its function is as follows. The pyrimidine cyclase gene of a two-gene Pycsar system, weakly generates cyclic UMP (cUMP) from UTP, has little to no activity on ATP, CTP or GTP. Expression of this and adjacent effector TpPycTM (AC A0A1T4LJG1) probably confers resistance to bacteriophage. The genes are probably only expressed in response to bacteriophage infection. The polypeptide is Uridylate cyclase (Treponema porcinum).